Consider the following 95-residue polypeptide: Selenoprotein K (95 aa).

The chain crosses the membrane as a helical span at residues 20-42; that stretch reads LSFLTDMFWGITDFIVMFFQSII. Residues 48–95 form a disordered region; sequence RRGCQNSSSRTRFDDGRGPPGNPRRRMGRIDHNSGPNAPPMSGGGUGR. Sec-93 is a non-standard amino acid (selenocysteine).

This sequence belongs to the selenoprotein K family.

Its subcellular location is the endoplasmic reticulum membrane. The protein localises to the cell membrane. Its function is as follows. Required for Ca(2+) flux in immune cells and plays a role in T-cell proliferation and in T-cell and neutrophil migration. Involved in endoplasmic reticulum-associated degradation (ERAD) of soluble glycosylated proteins. Required for cell surface expression of CD36 and involved in macrophage uptake of low-density lipoprotein and in foam cell formation. Required for palmitoylation. The sequence is that of Selenoprotein K (selenok) from Xenopus tropicalis (Western clawed frog).